A 65-amino-acid chain; its full sequence is Large ribosomal subunit protein bL35 (65 aa).

Residues 1–25 (MPKMKSHRGAAKRFKKTGTGKLKRA) form a disordered region.

It belongs to the bacterial ribosomal protein bL35 family.

This chain is Large ribosomal subunit protein bL35, found in Clostridium botulinum (strain Alaska E43 / Type E3).